Reading from the N-terminus, the 295-residue chain is tRNA pseudouridine synthase A (295 aa).

Residue Asp67 is the Nucleophile of the active site. Position 125 (Tyr125) interacts with substrate.

This sequence belongs to the tRNA pseudouridine synthase TruA family. Homodimer.

The catalysed reaction is uridine(38/39/40) in tRNA = pseudouridine(38/39/40) in tRNA. Its function is as follows. Formation of pseudouridine at positions 38, 39 and 40 in the anticodon stem and loop of transfer RNAs. The chain is tRNA pseudouridine synthase A from Prochlorococcus marinus (strain MIT 9303).